The sequence spans 555 residues: Anaerobic magnesium-protoporphyrin IX monomethyl ester cyclase (555 aa).

Residues 9 to 143 (NYHSGGAEIA…TAVDQGRFMA (135 aa)) form the B12-binding domain. Residues 191–416 (PMNKRVAIPN…MKPDAMDRGE (226 aa)) form the Radical SAM core domain. Cysteine 205, cysteine 209, and cysteine 212 together coordinate [4Fe-4S] cluster.

The protein belongs to the BchE family. The cofactor is [4Fe-4S] cluster. It depends on adenosylcob(III)alamin as a cofactor.

The enzyme catalyses Mg-protoporphyrin IX 13-monomethyl ester + 3 S-adenosyl-L-methionine + H2O = 3,8-divinyl protochlorophyllide a + 3 5'-deoxyadenosine + 3 L-methionine + 4 H(+). The protein operates within porphyrin-containing compound metabolism; bacteriochlorophyll biosynthesis (light-independent). Functionally, involved in the tetrapyrrole biosynthetic pathways leading to chlorophyll and bacteriochlorophyll (BChl). Catalyzes the anaerobic formation of the isocyclic ring (E-ring) in Mg-protoporphyrin monomethyl ester (MPE) to yield protochlorophyllide a (PChlide a) via a six-electron oxidation and the formation of an oxo group at position C13 using oxygen from a water molecule. The chain is Anaerobic magnesium-protoporphyrin IX monomethyl ester cyclase (bchE) from Rubrivivax gelatinosus (Rhodocyclus gelatinosus).